The chain runs to 57 residues: Small nuclear protein PRAC1 (57 aa).

Positions 38-57 (RSDGSACNSGISGGRGRKIP) are disordered.

As to expression, highly expressed in prostate, rectum, and distal colon, and weakly expressed in bladder. Expressed in prostate cancer cell lines.

The protein localises to the nucleus. This Homo sapiens (Human) protein is Small nuclear protein PRAC1 (PRAC1).